The chain runs to 90 residues: Small ribosomal subunit protein uS15c (90 aa).

It belongs to the universal ribosomal protein uS15 family. As to quaternary structure, part of the 30S ribosomal subunit.

It localises to the plastid. Its subcellular location is the chloroplast. The chain is Small ribosomal subunit protein uS15c (rps15) from Phaseolus vulgaris (Kidney bean).